Reading from the N-terminus, the 160-residue chain is Phosphopantetheine adenylyltransferase (160 aa).

S8 serves as a coordination point for substrate. Residues S8 to F9 and H16 each bind ATP. The substrate site is built by K40, L74, and K88. ATP is bound by residues G89–R91, E99, and Y124–T130.

Belongs to the bacterial CoaD family. In terms of assembly, homohexamer. Mg(2+) is required as a cofactor.

The protein resides in the cytoplasm. The enzyme catalyses (R)-4'-phosphopantetheine + ATP + H(+) = 3'-dephospho-CoA + diphosphate. It participates in cofactor biosynthesis; coenzyme A biosynthesis; CoA from (R)-pantothenate: step 4/5. Its function is as follows. Reversibly transfers an adenylyl group from ATP to 4'-phosphopantetheine, yielding dephospho-CoA (dPCoA) and pyrophosphate. This is Phosphopantetheine adenylyltransferase from Thermus thermophilus (strain ATCC BAA-163 / DSM 7039 / HB27).